A 549-amino-acid polypeptide reads, in one-letter code: Carboxylesterase 1C (549 aa).

The signal sequence occupies residues 1 to 18 (MWLCALVWASLAVCPIWG). A glycan (N-linked (GlcNAc...) asparagine) is linked at N79. Residues C87 and C116 are joined by a disulfide bond. Residue S221 is the Acyl-ester intermediate of the active site. C273 and C284 are disulfide-bonded. Residues N274, N275, and N302 are each glycosylated (N-linked (GlcNAc...) asparagine). E340 serves as the catalytic Charge relay system. An N-linked (GlcNAc...) asparagine glycan is attached at N375. H453 serves as the catalytic Charge relay system. A Phosphoserine modification is found at S471. N476 carries an N-linked (GlcNAc...) asparagine glycan. A Prevents secretion from ER motif is present at residues 546 to 549 (TEHT).

It belongs to the type-B carboxylesterase/lipase family.

The protein localises to the endoplasmic reticulum lumen. The catalysed reaction is a carboxylic ester + H2O = an alcohol + a carboxylate + H(+). In terms of biological role, involved in the detoxification of xenobiotics and in the activation of ester and amide prodrugs. Involved in the extracellular metabolism of lung surfactant. The protein is Carboxylesterase 1C (Ces1c) of Rattus norvegicus (Rat).